Consider the following 617-residue polypeptide: Cytoplasmic polyadenylation element-binding protein 1 (617 aa).

Positions 1–38 are disordered; it reads MQSQLKACGDAPAPSCSLHHRRTISKKPSNGGNSGGGG. RRM domains follow at residues 273 to 377 and 394 to 465; these read RKVF…AWRL and RTVF…HADT. 2 disordered regions span residues 534–568 and 592–617; these read DQTR…QNVT and NQNN…AIGY. Positions 542-563 are enriched in basic residues; it reads PPHHSTSHYHHRSTPSHHHNHT.

As to quaternary structure, interacts with fbf-1.

Functionally, cytoplasmic polyadenylation element binding protein that binds to and regulates the translation of specific mRNAs. Essential for progression through meiosis. Involved in spermatogenesis. The polypeptide is Cytoplasmic polyadenylation element-binding protein 1 (cpb-1) (Caenorhabditis japonica).